Here is a 95-residue protein sequence, read N- to C-terminus: Protein J1 homolog (95 aa).

This sequence belongs to the chordopoxvirinae J1 family. Homodimer. Part of a complex composed of A30, G7, F10 kinase, A15, D2, D3, and J1. Interacts with A45.

The protein resides in the virion. It localises to the host cytoplasm. Late protein which is a part of a large complex required for early virion morphogenesis. This complex participates in the formation of virosomes and the incorporation of virosomal contents into nascent immature virions. J1 protein is required for DNA packaging during immature virions (IV) formation. The polypeptide is Protein J1 homolog (Sus scrofa (Pig)).